The chain runs to 529 residues: MFS glucose transporter mfs1 (529 aa).

12 consecutive transmembrane segments (helical) span residues 7 to 27 (VYFL…DISS), 52 to 72 (SITC…SFIA), 86 to 106 (ILWI…LLVV), 109 to 129 (VIAG…QAEI), 138 to 158 (VISL…FIQY), 179 to 199 (IPWG…FLFP), 272 to 292 (LQMW…VYIM), 301 to 321 (LLTA…AIIY), 330 to 350 (AILI…GLQG), 375 to 395 (AVGK…ATTI), 415 to 439 (AVSL…PLLW), and 446 to 464 (YMIF…FLTA).

Belongs to the major facilitator superfamily. Sugar transporter (TC 2.A.1.1) family.

It localises to the membrane. In terms of biological role, probable MFS glucose transporter; part of the gene cluster 27 that mediates the biosynthesis of asparasone A, a sclerotium-specific anthraquinone pigment important for sclerotial survival. The sequence is that of MFS glucose transporter mfs1 from Aspergillus flavus (strain ATCC 200026 / FGSC A1120 / IAM 13836 / NRRL 3357 / JCM 12722 / SRRC 167).